We begin with the raw amino-acid sequence, 161 residues long: Nucleotide-binding protein Shewmr4_3156 (161 aa).

Belongs to the YajQ family.

In terms of biological role, nucleotide-binding protein. This is Nucleotide-binding protein Shewmr4_3156 from Shewanella sp. (strain MR-4).